Consider the following 519-residue polypeptide: Serine/threonine-protein kinase RIO3 (519 aa).

S8 and S112 each carry phosphoserine. Residues 121-159 (PYEDSDSSEDEVDWQDTRDDPYRPAKPVPTPKKGFIGKG) form a disordered region. A Phosphotyrosine modification is found at Y122. A compositionally biased stretch (acidic residues) spans 124 to 134 (DSDSSEDEVDW). Phosphoserine occurs at positions 125, 127, and 128. The region spanning 251-519 (ETITGCISTG…DGDPPLLYDE (269 aa)) is the Protein kinase domain. Residues 257-265 (ISTGKESVV) and K290 each bind ATP. D406 serves as the catalytic Proton acceptor.

The protein belongs to the protein kinase superfamily. RIO-type Ser/Thr kinase family. Interacts with CASP10. Interacts with IRF3; RIOK3 probably mediates the interaction of TBK1 with IRF3. Associated with 40S pre-ribosomal particles. Mg(2+) is required as a cofactor. Post-translationally, autophosphorylated (in vitro). In terms of tissue distribution, widely expressed.

The protein localises to the cytoplasm. It carries out the reaction L-seryl-[protein] + ATP = O-phospho-L-seryl-[protein] + ADP + H(+). It catalyses the reaction L-threonyl-[protein] + ATP = O-phospho-L-threonyl-[protein] + ADP + H(+). Its function is as follows. Involved in regulation of type I interferon (IFN)-dependent immune response which plays a critical role in the innate immune response against DNA and RNA viruses. May act as an adapter protein essential for the recruitment of TBK1 to IRF3. Phosphorylates IFIH1 on 'Ser-828' interfering with IFIH1 filament assembly on long dsRNA and resulting in attenuated IFIH1-signaling. Can inhibit CASP10 isoform 7-mediated activation of the NF-kappaB signaling pathway. May play a role in the biogenesis of the 40S ribosomal subunit. Involved in the processing of 21S pre-rRNA to the mature 18S rRNA. This Homo sapiens (Human) protein is Serine/threonine-protein kinase RIO3 (RIOK3).